Reading from the N-terminus, the 228-residue chain is Ferric nitrobindin-like protein (228 aa).

The segment at Met1–Lys21 is disordered. Positions Gly75–Gly81 match the GXWXGXG motif.

The protein belongs to the nitrobindin family.

This Mycobacterium leprae (strain TN) protein is Ferric nitrobindin-like protein.